Reading from the N-terminus, the 326-residue chain is Tetraacyldisaccharide 4'-kinase (326 aa).

Position 54–61 (54–61 (SVGGTGKT)) interacts with ATP.

It belongs to the LpxK family.

The enzyme catalyses a lipid A disaccharide + ATP = a lipid IVA + ADP + H(+). The protein operates within glycolipid biosynthesis; lipid IV(A) biosynthesis; lipid IV(A) from (3R)-3-hydroxytetradecanoyl-[acyl-carrier-protein] and UDP-N-acetyl-alpha-D-glucosamine: step 6/6. Functionally, transfers the gamma-phosphate of ATP to the 4'-position of a tetraacyldisaccharide 1-phosphate intermediate (termed DS-1-P) to form tetraacyldisaccharide 1,4'-bis-phosphate (lipid IVA). The protein is Tetraacyldisaccharide 4'-kinase of Rickettsia canadensis (strain McKiel).